The following is a 595-amino-acid chain: MAFWLSLIFFCFCTFASSTPPDDPVKCESGNNMCTVTNSYGAFPDRSICEAAKVEYPKTEAELVSIVAAATRAGQKVRVVTRYVHSIPKLVCTDGKDGVLISTKFLNNVVGTNPEAKTLTVESGVTLRQLIGEAAELELALPHAPYWWGLTVGGLMGTGAHGSSLWGKGSAVHDYVSEIRMVSPGLASDGYVKVRVLSETIDPDEFRAAKVSLGVLGVISQVTFQLQPMFKRSLTFVMQNDSDFGDQAVTFGEKHEFADFLWLPSQGKVVYRMDDRVPVNTSGNGLFDFFPFRPQLSVALAIIRSLEESEESSGDANDKCARAEQITSFLFSISYGVTNNGMEFTGYPVIGKQNHMMSSGTCLDSHQDGLITSCPWDPRIKGQFFHQTAFSIPLTRVKGFINDIKALVKIEPKSLCALERSNGILIRYVTSSPAFLGKEEKALDFDLTYYRSKDDPLAPRLYEDFIEEIEQMAIFKYNALPHWGKNRNLAFDGVIRKYKNANTFLKVKERFDPLGLFSTEWTNQILGLKGNVTIVKEGCALEGLCVCSDDAHCAPKKGYLCRPGKVYTKARVCTHVKSVNGYDDHTKFNLMFNRI.

The first 18 residues, 1-18 (MAFWLSLIFFCFCTFASS), serve as a signal peptide directing secretion. The 183-residue stretch at 47–229 (SICEAAKVEY…SQVTFQLQPM (183 aa)) folds into the FAD-binding PCMH-type domain.

This sequence belongs to the oxygen-dependent FAD-linked oxidoreductase family. FAD is required as a cofactor.

It carries out the reaction L-gulono-1,4-lactone + O2 = L-ascorbate + H2O2 + H(+). Its pathway is cofactor biosynthesis; L-ascorbate biosynthesis. May be involved in the biosynthesis of ascorbic acid. The chain is Probable L-gulonolactone oxidase 1 from Arabidopsis thaliana (Mouse-ear cress).